Consider the following 872-residue polypeptide: Valine--tRNA ligase (872 aa).

The 'HIGH' region signature appears at 49–59 (PNVTGILHIGH). The short motif at 531–535 (KMSKS) is the 'KMSKS' region element. K534 contacts ATP. The stretch at 810–871 (PLIARLKKQL…IQQELDLLEQ (62 aa)) forms a coiled coil.

Belongs to the class-I aminoacyl-tRNA synthetase family. ValS type 1 subfamily. Monomer.

The protein resides in the cytoplasm. It carries out the reaction tRNA(Val) + L-valine + ATP = L-valyl-tRNA(Val) + AMP + diphosphate. Its function is as follows. Catalyzes the attachment of valine to tRNA(Val). As ValRS can inadvertently accommodate and process structurally similar amino acids such as threonine, to avoid such errors, it has a 'posttransfer' editing activity that hydrolyzes mischarged Thr-tRNA(Val) in a tRNA-dependent manner. The polypeptide is Valine--tRNA ligase (Helicobacter pylori (strain J99 / ATCC 700824) (Campylobacter pylori J99)).